The following is a 163-amino-acid chain: Cyanate hydratase (163 aa).

Active-site residues include Arg103, Glu106, and Ser129.

It belongs to the cyanase family.

The catalysed reaction is cyanate + hydrogencarbonate + 3 H(+) = NH4(+) + 2 CO2. Functionally, catalyzes the reaction of cyanate with bicarbonate to produce ammonia and carbon dioxide. The protein is Cyanate hydratase of Talaromyces marneffei (strain ATCC 18224 / CBS 334.59 / QM 7333) (Penicillium marneffei).